The following is a 156-amino-acid chain: MAASLTLMTSPPCSRSSKSPSPSPSPSLSCNQQQQYKPLLHHQWPPQISLKKEKSNESIVAKSPVIAAATKGGSPSVQEQKWIHEGVITESLPNGMFWVKLDNCEDLVLGYISGRIRRSFIRVLPGDRVKIEVSRYDSTRGRITYRLRNNKDATTT.

Positions Met-1–Gln-35 are disordered. A chloroplast-targeting transit peptide spans Met-1 to Ser-49. Residues Ser-10–Pro-20 show a composition bias toward low complexity. The 77-residue stretch at Gly-72–Arg-148 folds into the S1-like domain.

It belongs to the IF-1 family. As to quaternary structure, component of the 30S ribosomal translation pre-initiation complex which assembles on the 30S ribosome in the order IF-2 and IF-3, IF-1 and N-formylmethionyl-tRNA(fMet); mRNA recruitment can occur at any time during PIC assembly.

The protein localises to the plastid. It is found in the chloroplast. One of the essential components for the initiation of protein synthesis. Stabilizes the binding of IF-2 and IF-3 on the 30S subunit to which N-formylmethionyl-tRNA(fMet) subsequently binds. Helps modulate mRNA selection, yielding the 30S pre-initiation complex (PIC). Upon addition of the 50S ribosomal subunit IF-1, IF-2 and IF-3 are released leaving the mature 70S translation initiation complex. This chain is Translation initiation factor IF-1, chloroplastic (infA), found in Mesembryanthemum crystallinum (Common ice plant).